The sequence spans 512 residues: Chitin synthase regulatory factor 2 (512 aa).

6 Sel1-like repeats span residues 224-260 (SEAL…DLNH), 261-296 (VQAA…SGQH), 297-333 (VGAM…LEAD), 337-377 (PQAL…KYGL), 378-414 (KDAQ…RKRN), and 415-452 (PEAM…YKNH). Cysteine methyl ester is present on cysteine 509. Residue cysteine 509 is the site of S-farnesyl cysteine attachment. The propeptide at 510 to 512 (IIS) is removed in mature form.

It localises to the membrane. Functionally, involved in chitin biosynthesis. This is Chitin synthase regulatory factor 2 (chr2) from Schizosaccharomyces pombe (strain 972 / ATCC 24843) (Fission yeast).